Here is a 388-residue protein sequence, read N- to C-terminus: N-acetylneuraminate epimerase (388 aa).

The N-terminal stretch at 1–26 (MFSLIGAKRQAIGIAALAWSTGAVMA) is a signal peptide. Kelch repeat units follow at residues 48–92 (MAYV…AAAG), 94–147 (KIFA…VGLA), 149–186 (GRIA…KLVD), 187–232 (SYMG…ATMG), 236–285 (FLLV…VAGA), 307–356 (ANAA…DAPG), and 358–387 (LLVV…LSVE).

Belongs to the NanM family. As to quaternary structure, homodimer.

It localises to the periplasm. It carries out the reaction N-acetyl-alpha-neuraminate = N-acetyl-beta-neuraminate. Functionally, converts alpha-N-acetylneuranimic acid (Neu5Ac) to the beta-anomer, accelerating the equilibrium between the alpha- and beta-anomers. Probably facilitates sialidase-negative bacteria to compete successfully for limited amounts of extracellular Neu5Ac, which is likely taken up in the beta-anomer. In addition, the rapid removal of sialic acid from solution might be advantageous to the bacterium to damp down host responses. This Brucella suis (strain ATCC 23445 / NCTC 10510) protein is N-acetylneuraminate epimerase.